The sequence spans 101 residues: ATP synthase subunit c (101 aa).

A run of 2 helical transmembrane segments spans residues 31–51 and 81–101; these read AFAY…GAGQ and AISE…IFVG.

Belongs to the ATPase C chain family. As to quaternary structure, F-type ATPases have 2 components, F(1) - the catalytic core - and F(0) - the membrane proton channel. F(1) has five subunits: alpha(3), beta(3), gamma(1), delta(1), epsilon(1). F(0) has three main subunits: a(1), b(2) and c(10-14). The alpha and beta chains form an alternating ring which encloses part of the gamma chain. F(1) is attached to F(0) by a central stalk formed by the gamma and epsilon chains, while a peripheral stalk is formed by the delta and b chains.

The protein resides in the cell membrane. In terms of biological role, f(1)F(0) ATP synthase produces ATP from ADP in the presence of a proton or sodium gradient. F-type ATPases consist of two structural domains, F(1) containing the extramembraneous catalytic core and F(0) containing the membrane proton channel, linked together by a central stalk and a peripheral stalk. During catalysis, ATP synthesis in the catalytic domain of F(1) is coupled via a rotary mechanism of the central stalk subunits to proton translocation. Key component of the F(0) channel; it plays a direct role in translocation across the membrane. A homomeric c-ring of between 10-14 subunits forms the central stalk rotor element with the F(1) delta and epsilon subunits. The polypeptide is ATP synthase subunit c (Mesomycoplasma hyopneumoniae (strain J / ATCC 25934 / NCTC 10110) (Mycoplasma hyopneumoniae)).